Reading from the N-terminus, the 64-residue chain is Large ribosomal subunit protein bL35 (64 aa).

A disordered region spans residues 1 to 23; that stretch reads MPKMKTHRGAAKRFKKTKNKIKR.

Belongs to the bacterial ribosomal protein bL35 family.

This Nitratiruptor sp. (strain SB155-2) protein is Large ribosomal subunit protein bL35.